The chain runs to 387 residues: 1-deoxy-D-xylulose 5-phosphate reductoisomerase (387 aa).

7 residues coordinate NADPH: threonine 10, glycine 11, serine 12, isoleucine 13, glycine 36, arginine 37, and asparagine 124. A 1-deoxy-D-xylulose 5-phosphate-binding site is contributed by lysine 125. Glutamate 126 contributes to the NADPH binding site. Aspartate 150 contacts Mn(2+). Serine 151, glutamate 152, serine 176, and histidine 199 together coordinate 1-deoxy-D-xylulose 5-phosphate. Mn(2+) is bound at residue glutamate 152. An NADPH-binding site is contributed by glycine 205. 1-deoxy-D-xylulose 5-phosphate contacts are provided by serine 212, asparagine 217, lysine 218, and glutamate 221. Position 221 (glutamate 221) interacts with Mn(2+).

Belongs to the DXR family. Requires Mg(2+) as cofactor. Mn(2+) serves as cofactor.

It carries out the reaction 2-C-methyl-D-erythritol 4-phosphate + NADP(+) = 1-deoxy-D-xylulose 5-phosphate + NADPH + H(+). The protein operates within isoprenoid biosynthesis; isopentenyl diphosphate biosynthesis via DXP pathway; isopentenyl diphosphate from 1-deoxy-D-xylulose 5-phosphate: step 1/6. In terms of biological role, catalyzes the NADPH-dependent rearrangement and reduction of 1-deoxy-D-xylulose-5-phosphate (DXP) to 2-C-methyl-D-erythritol 4-phosphate (MEP). The polypeptide is 1-deoxy-D-xylulose 5-phosphate reductoisomerase (Cyanothece sp. (strain PCC 7425 / ATCC 29141)).